Here is a 185-residue protein sequence, read N- to C-terminus: Adenine phosphoribosyltransferase (185 aa).

The protein belongs to the purine/pyrimidine phosphoribosyltransferase family. Homodimer.

The protein localises to the cytoplasm. It carries out the reaction AMP + diphosphate = 5-phospho-alpha-D-ribose 1-diphosphate + adenine. The protein operates within purine metabolism; AMP biosynthesis via salvage pathway; AMP from adenine: step 1/1. Its function is as follows. Catalyzes a salvage reaction resulting in the formation of AMP, that is energically less costly than de novo synthesis. The polypeptide is Adenine phosphoribosyltransferase (Kineococcus radiotolerans (strain ATCC BAA-149 / DSM 14245 / SRS30216)).